Consider the following 879-residue polypeptide: Alanine--tRNA ligase (879 aa).

The segment at 426 to 449 (KQKERARNARGNMDGESWKEDPLS) is disordered. Zn(2+) is bound by residues histidine 566, histidine 570, cysteine 668, and histidine 672.

It belongs to the class-II aminoacyl-tRNA synthetase family. Requires Zn(2+) as cofactor.

It localises to the cytoplasm. The enzyme catalyses tRNA(Ala) + L-alanine + ATP = L-alanyl-tRNA(Ala) + AMP + diphosphate. In terms of biological role, catalyzes the attachment of alanine to tRNA(Ala) in a two-step reaction: alanine is first activated by ATP to form Ala-AMP and then transferred to the acceptor end of tRNA(Ala). Also edits incorrectly charged Ser-tRNA(Ala) and Gly-tRNA(Ala) via its editing domain. This Clostridioides difficile (strain 630) (Peptoclostridium difficile) protein is Alanine--tRNA ligase.